A 372-amino-acid chain; its full sequence is NAD(P)H-quinone oxidoreductase subunit 1 (372 aa).

Transmembrane regions (helical) follow at residues 27-47 (IIWL…GVLV), 97-117 (ILFT…WLIV), 128-148 (VGIG…GLLM), 176-196 (LALS…IDIV), 204-224 (ILSW…ICAL), 266-286 (ILSA…PIPV), 308-328 (SIGI…AILL), and 347-367 (FLLP…LAFP).

Belongs to the complex I subunit 1 family. In terms of assembly, NDH-1 is composed of at least 11 different subunits.

It is found in the cellular thylakoid membrane. The enzyme catalyses a plastoquinone + NADH + (n+1) H(+)(in) = a plastoquinol + NAD(+) + n H(+)(out). The catalysed reaction is a plastoquinone + NADPH + (n+1) H(+)(in) = a plastoquinol + NADP(+) + n H(+)(out). In terms of biological role, NDH-1 shuttles electrons from an unknown electron donor, via FMN and iron-sulfur (Fe-S) centers, to quinones in the respiratory and/or the photosynthetic chain. The immediate electron acceptor for the enzyme in this species is believed to be plastoquinone. Couples the redox reaction to proton translocation, and thus conserves the redox energy in a proton gradient. The chain is NAD(P)H-quinone oxidoreductase subunit 1 from Prochlorococcus marinus (strain MIT 9312).